The sequence spans 648 residues: MMLEPSPPPLTTTVTPSLPSSLKKSVTDNDQNNNNVPRKRKLACQNCRRRRRKCNMEKPCSNCIKFRTECVFTQQDLRNKRYSTTYVEALQSQIRSLKEQLQILSSSSSTIASNALSSLKNNSDHGDAPNEKILKYGETAQSALPSSESNDENESDAFTKKMPSESPPPVGTNSIYPSNSLSIIKKKTDGSTRYQQQQVSLKNLSRSPLILRSLSLFFKWLYPGHYLFIHRETFLSAFFGDTNTKSYYCSEELVFAIAALGSLISYKSETELFQQSEVFYQRAKTIVLKKIFQLEDSSLAESSSSSKLAIIQTLLCLAFYDIGSGENPMAWYLSGLAFRIAHEIGLHLNPEAWSNVYEDELSIMDFEVRSRIYWGCYIADHLIAILFGRSTSLRLSNSTVPETDELPEIETGIEEYIYDPKVILSTANPLKKLIVLSRITEIFASKIFSPNETLLQRSEYLAKFNLEVYNWRRDLPPELQWTKRSLMEMTDFNPTIAYVWFHYYIVLISYNKPFIYEIKQSRELVEGYVDELYYLLKVWKNKFKTFEKATIYMIYSAILAIQCMKSNLIKKDRKQDFLNFLSAPTLNYELARKFIENSEDALHNSETMDLLGTLSHGNDFALEYNFDFTLLNEIDMLIGGNTNDGLSK.

Residues 1–10 (MMLEPSPPPL) show a composition bias toward pro residues. The disordered stretch occupies residues 1–37 (MMLEPSPPPLTTTVTPSLPSSLKKSVTDNDQNNNNVP). Positions 11-22 (TTTVTPSLPSSL) are enriched in low complexity. The zn(2)-C6 fungal-type DNA-binding region spans 44 to 70 (CQNCRRRRRKCNMEKPCSNCIKFRTEC). Residues 140–177 (AQSALPSSESNDENESDAFTKKMPSESPPPVGTNSIYP) form a disordered region. Phosphoserine is present on residues S164 and S166.

It localises to the nucleus. Its function is as follows. Activates the CHA1 gene for L-serine dehydratase. Binds to the DNA sequence 5'-GVGGARAYRTRATTCCRC-3'. The chain is Activatory protein CHA4 (CHA4) from Saccharomyces cerevisiae (strain ATCC 204508 / S288c) (Baker's yeast).